A 369-amino-acid polypeptide reads, in one-letter code: Histidinol-phosphate aminotransferase (369 aa).

Residue Lys-223 is modified to N6-(pyridoxal phosphate)lysine.

It belongs to the class-II pyridoxal-phosphate-dependent aminotransferase family. Histidinol-phosphate aminotransferase subfamily. As to quaternary structure, homodimer. It depends on pyridoxal 5'-phosphate as a cofactor.

The catalysed reaction is L-histidinol phosphate + 2-oxoglutarate = 3-(imidazol-4-yl)-2-oxopropyl phosphate + L-glutamate. It functions in the pathway amino-acid biosynthesis; L-histidine biosynthesis; L-histidine from 5-phospho-alpha-D-ribose 1-diphosphate: step 7/9. This Shouchella clausii (strain KSM-K16) (Alkalihalobacillus clausii) protein is Histidinol-phosphate aminotransferase.